Consider the following 404-residue polypeptide: Multidrug resistance protein MdtH (404 aa).

At 1-12 (MSRVSQARNLGK) the chain is on the cytoplasmic side. Residues 13-33 (YFLLIDNMLVVLGFFVVFPLI) form a helical membrane-spanning segment. At 34-98 (SIRFVDQMGW…GFATMGIAHE (65 aa)) the chain is on the periplasmic side. A helical membrane pass occupies residues 99–116 (PWLLWFSCFLSGLGGTLF). Residues 117–138 (DPPRSALVVKLIRPEQRGRFFS) lie on the Cytoplasmic side of the membrane. The helical transmembrane segment at 139-159 (LLMMQDSAGAVIGALLGSWLL) threads the bilayer. Topologically, residues 160–164 (QYDFR) are periplasmic. The chain crosses the membrane as a helical span at residues 165–185 (LVCAMGAILFIVCAIFNAWLL). Topologically, residues 186 to 213 (PAWKLSTVRTPVREGMRRVISDKRFVTY) are cytoplasmic. The helical transmembrane segment at 214-234 (VLTLAGYYMLAVQVMLMLPIM) threads the bilayer. Over 235 to 243 (VNDVAGSPA) the chain is Periplasmic. The helical transmembrane segment at 244 to 264 (AVKWMYAIEACLSLTLLYPIA) threads the bilayer. Over 265–276 (RWSEKRFRLEHR) the chain is Cytoplasmic. A helical membrane pass occupies residues 277-297 (LMAGLLIMSLSMIPIGLAGNL). The Periplasmic portion of the chain corresponds to 298-299 (QQ). Residues 300–320 (LFTLICAFYIGSVIAEPARET) form a helical membrane-spanning segment. The Cytoplasmic portion of the chain corresponds to 321-339 (LSASLTDARARGSYMGFSR). A helical transmembrane segment spans residues 340–360 (LGLAIGGAIGYIGGGWLFDMG). The Periplasmic segment spans residues 361–367 (KTLAQPE). A helical transmembrane segment spans residues 368–388 (LPWMMLGIIGFITFLALGWQF). Residues 389-404 (SHKRTPRQYTGARRLI) lie on the Cytoplasmic side of the membrane.

Belongs to the major facilitator superfamily. DHA1 family. MdtH (TC 2.A.1.2.21) subfamily.

Its subcellular location is the cell inner membrane. The sequence is that of Multidrug resistance protein MdtH from Salmonella arizonae (strain ATCC BAA-731 / CDC346-86 / RSK2980).